We begin with the raw amino-acid sequence, 201 residues long: Small ribosomal subunit protein uS4 (201 aa).

Residues Ser-91–Glu-151 enclose the S4 RNA-binding domain.

This sequence belongs to the universal ribosomal protein uS4 family. In terms of assembly, part of the 30S ribosomal subunit. Contacts protein S5. The interaction surface between S4 and S5 is involved in control of translational fidelity.

In terms of biological role, one of the primary rRNA binding proteins, it binds directly to 16S rRNA where it nucleates assembly of the body of the 30S subunit. Functionally, with S5 and S12 plays an important role in translational accuracy. This Corynebacterium jeikeium (strain K411) protein is Small ribosomal subunit protein uS4.